We begin with the raw amino-acid sequence, 1881 residues long: Nuclear pore membrane glycoprotein 210-like (1881 aa).

A signal peptide spans 1–32 (MIAFGAPRRRSFGLLFSLAPHLFFLFLIGTLA). N-linked (GlcNAc...) asparagine glycosylation is found at Asn-80, Asn-344, and Asn-808. Residues 1078–1150 (FPPFRLIPEK…TIQTVNEDTG (73 aa)) form the BIG2 domain. N-linked (GlcNAc...) asparagine glycosylation is present at Asn-1441. A helical transmembrane segment spans residues 1804 to 1824 (YQILLFTLFAVLASTSFIFLA).

Belongs to the NUP210 family. In terms of tissue distribution, expressed in testis.

It is found in the nucleus membrane. Its subcellular location is the nucleus. The protein localises to the nucleoplasm. In Mus musculus (Mouse), this protein is Nuclear pore membrane glycoprotein 210-like (Nup210l).